Here is a 367-residue protein sequence, read N- to C-terminus: Testis-specific serine/threonine-protein kinase 1 (367 aa).

Residues 12 to 272 (YLLGINLGEG…IDEILSHCWM (261 aa)) form the Protein kinase domain. Residues 18–26 (LGEGSYAKV) and Lys41 contribute to the ATP site. Asp136 serves as the catalytic Proton acceptor. Thr174 bears the Phosphothreonine mark. The interval 276-367 (ARGSPSVAIN…PQQPPETRAQ (92 aa)) is disordered. The segment covering 303–314 (GSDKKSATKLEP) has biased composition (basic and acidic residues).

This sequence belongs to the protein kinase superfamily. CAMK Ser/Thr protein kinase family. As to quaternary structure, interacts with TSSK2. Interacts with HSP90; this interaction stabilizes TSSK1. Mg(2+) is required as a cofactor. Post-translationally, autophosphorylated. Ubiquitinated; HSP90 activity negatively regulates ubiquitination and degradation. Testis-specific. Present in sperm (at protein level).

It is found in the cytoplasm. The protein resides in the cytoplasmic vesicle. Its subcellular location is the secretory vesicle. It localises to the acrosome. The protein localises to the cell projection. It is found in the cilium. The protein resides in the flagellum. The catalysed reaction is L-seryl-[protein] + ATP = O-phospho-L-seryl-[protein] + ADP + H(+). It carries out the reaction L-threonyl-[protein] + ATP = O-phospho-L-threonyl-[protein] + ADP + H(+). Kinase activity is specifically inhibited by 2 classes of compounds: biphenyl compounds (1,1'-(biphenyl-4,4'-diyl)bis(2,2-dihydroxyethanone)) and 1,2,7-trialky-1H-imidazo[4,5-g]quinoxalin-6-one. Activated by phosphorylation on Thr-174 and potentially by autophosphorylation. In terms of biological role, testis-specific serine/threonine-protein kinase required during spermatid development. Phosphorylates 'Ser-288' of TSKS. Involved in the late stages of spermatogenesis, during the reconstruction of the cytoplasm. During spermatogenesis, required for the transformation of a ring-shaped structure around the base of the flagellum originating from the chromatoid body. This chain is Testis-specific serine/threonine-protein kinase 1 (TSSK1B), found in Homo sapiens (Human).